A 455-amino-acid chain; its full sequence is Ribosomal protein uS12 methylthiotransferase RimO (455 aa).

The MTTase N-terminal domain occupies 10–120 (PKVGMVSLGC…VVEAVHDAAP (111 aa)). The [4Fe-4S] cluster site is built by C19, C55, C84, C151, C155, and C158. Residues 137–380 (LTPRHYSYLK…MAKTAAISAA (244 aa)) form the Radical SAM core domain. One can recognise a TRAM domain in the interval 383–455 (EAKIGRTLPV…DEHDLFGVVT (73 aa)).

It belongs to the methylthiotransferase family. RimO subfamily. Requires [4Fe-4S] cluster as cofactor.

It localises to the cytoplasm. It carries out the reaction L-aspartate(89)-[ribosomal protein uS12]-hydrogen + (sulfur carrier)-SH + AH2 + 2 S-adenosyl-L-methionine = 3-methylsulfanyl-L-aspartate(89)-[ribosomal protein uS12]-hydrogen + (sulfur carrier)-H + 5'-deoxyadenosine + L-methionine + A + S-adenosyl-L-homocysteine + 2 H(+). Catalyzes the methylthiolation of an aspartic acid residue of ribosomal protein uS12. This chain is Ribosomal protein uS12 methylthiotransferase RimO, found in Sphingopyxis alaskensis (strain DSM 13593 / LMG 18877 / RB2256) (Sphingomonas alaskensis).